We begin with the raw amino-acid sequence, 209 residues long: Uracil phosphoribosyltransferase (209 aa).

5-phospho-alpha-D-ribose 1-diphosphate-binding positions include R79, R104, and 131-139 (DPMLATGGS). Residues I194 and 199-201 (GDA) contribute to the uracil site. 5-phospho-alpha-D-ribose 1-diphosphate is bound at residue D200.

Belongs to the UPRTase family. Requires Mg(2+) as cofactor.

It catalyses the reaction UMP + diphosphate = 5-phospho-alpha-D-ribose 1-diphosphate + uracil. Its pathway is pyrimidine metabolism; UMP biosynthesis via salvage pathway; UMP from uracil: step 1/1. Its activity is regulated as follows. Allosterically activated by GTP. Its function is as follows. Catalyzes the conversion of uracil and 5-phospho-alpha-D-ribose 1-diphosphate (PRPP) to UMP and diphosphate. The chain is Uracil phosphoribosyltransferase from Clostridium beijerinckii (strain ATCC 51743 / NCIMB 8052) (Clostridium acetobutylicum).